The chain runs to 260 residues: FAS1 domain-containing protein SELMODRAFT_448915 (260 aa).

Residues 1–35 (MRRTGRSYKPLLSQLKDHHIPVHPSSRAERAMESR) lie on the Cytoplasmic side of the membrane. The helical transmembrane segment at 36-58 (TLLVLLFVGVVTIVSSGLERAAA) threads the bilayer. Positions 59-198 (QDDTDDGILP…IACHGIDRVL (140 aa)) constitute an FAS1 domain. Residues 59 to 260 (QDDTDDGILP…SSASRYPVSE (202 aa)) lie on the Extracellular side of the membrane. N-linked (GlcNAc...) asparagine glycans are attached at residues N118, N169, N176, N201, N236, and N247. The segment at 210-260 (PEASPPFGAEQASPAPEALPPGTRSPNNTANPSNRKSNSTRSSASRYPVSE) is disordered. The segment covering 233–254 (RSPNNTANPSNRKSNSTRSSAS) has biased composition (polar residues).

The protein resides in the membrane. The chain is FAS1 domain-containing protein SELMODRAFT_448915 from Selaginella moellendorffii (Spikemoss).